Consider the following 82-residue polypeptide: Small ribosomal subunit protein bS16 (82 aa).

This sequence belongs to the bacterial ribosomal protein bS16 family.

This chain is Small ribosomal subunit protein bS16, found in Pectobacterium atrosepticum (strain SCRI 1043 / ATCC BAA-672) (Erwinia carotovora subsp. atroseptica).